We begin with the raw amino-acid sequence, 694 residues long: uncharacterized protein (694 aa).

A Resolvase/invertase-type recombinase catalytic domain is found at 17–168; the sequence is DAFLYVRQSS…GGILNKARRG (152 aa). S25 functions as the O-(5'-phospho-DNA)-serine intermediate in the catalytic mechanism. A DNA-binding region (recombinase) is located at residues 175–316; sequence PIGLVYTPDA…QAALEQNATG (142 aa). A helical membrane pass occupies residues 386–406; it reads AVSALLLEVMAPAAIDVALAV.

Its subcellular location is the membrane. This is an uncharacterized protein from Sinorhizobium fredii (strain NBRC 101917 / NGR234).